Reading from the N-terminus, the 71-residue chain is Beta-defensin 2 (71 aa).

The N-terminal stretch at 1–20 (MRTLCSLLLICCLLFSYTTP) is a signal peptide. 3 disulfide bridges follow: Cys37-Cys66, Cys44-Cys59, and Cys49-Cys67.

It belongs to the beta-defensin family. In terms of tissue distribution, kidney, uterus and to a lesser extent in heart.

It is found in the secreted. Has bactericidal activity. This chain is Beta-defensin 2 (Defb2), found in Mus musculus (Mouse).